The primary structure comprises 370 residues: A-type ATP synthase subunit C (370 aa).

Belongs to the V-ATPase V0D/AC39 subunit family. As to quaternary structure, has multiple subunits with at least A(3), B(3), C, D, E, F, H, I and proteolipid K(x).

It localises to the cell membrane. Component of the A-type ATP synthase that produces ATP from ADP in the presence of a proton gradient across the membrane. This Pyrococcus horikoshii (strain ATCC 700860 / DSM 12428 / JCM 9974 / NBRC 100139 / OT-3) protein is A-type ATP synthase subunit C.